The primary structure comprises 224 residues: MKPKYALRKDMIGEFTLNKSFNTYRGKVLKADFNGPIEGIVMKNKKEHIYFYPLLALHMVKPLNCVPINVIPKTSLPTNPKNVHIKEALSRIVGRTLKVYYETPKTSYLGRLLGFTRGVFSWTLVLEIHGEVVLLFNPDYIVYYGTKWKFLKNNPPYKPPRLMNITKTANYLKRCLLEDVIIEPEYPRINIEDKVFVYPYGVVSKDDYLGKTVEDILKEKEFLI.

This is an uncharacterized protein from Methanocaldococcus jannaschii (strain ATCC 43067 / DSM 2661 / JAL-1 / JCM 10045 / NBRC 100440) (Methanococcus jannaschii).